The sequence spans 190 residues: uncharacterized protein (190 aa).

This is an uncharacterized protein from Acidianus hospitalis (AFV-1).